Reading from the N-terminus, the 904-residue chain is Pantothenate kinase 2 (904 aa).

The segment at 1 to 56 (MAANNNSDPILDEGGGGGVKHEAVGEAGEGKGGGGGAAATQAPAAMLPRSGSRPQL) is disordered. Positions 1–472 (MAANNNSDPI…LGDLNEKISW (472 aa)) are pantothenate kinase. A 4'-phosphopantetheine phosphatase region spans residues 473-904 (MEKFVQKGTQ…DCICKFEPVP (432 aa)). Mn(2+) is bound by residues Asp735, Asn736, and Asp771. A Subfamily II EGMGR motif motif is present at residues 855-859 (EGMGR).

In the N-terminal section; belongs to the type II pantothenate kinase family. The protein in the C-terminal section; belongs to the damage-control phosphatase family. Phosphopantetheine phosphatase II subfamily. Mn(2+) serves as cofactor. It depends on Ni(2+) as a cofactor.

The enzyme catalyses (R)-pantothenate + ATP = (R)-4'-phosphopantothenate + ADP + H(+). The catalysed reaction is (R)-4'-phosphopantothenate + H2O = (R)-pantothenate + phosphate. It catalyses the reaction (R)-4'-phosphopantetheine + H2O = (R)-pantetheine + phosphate. It carries out the reaction (R)-4'-phosphopantetheine sulfonate + H2O = (R)-pantetheine sulfonate + phosphate. Its pathway is cofactor biosynthesis; coenzyme A biosynthesis; CoA from (R)-pantothenate: step 1/5. Catalyzes the phosphorylation of pantothenate the first step in CoA biosynthesis. May play a role in the physiological regulation of the intracellular CoA concentration. Functionally redudant with PANK1. The phosphatase activity shows preference for normal or oxidatively damaged intermediates of 4'-phosphopantetheine, which provides strong indirect evidence that the phosphatase activity pre-empts damage in the CoA pathway. Hydrolyzing excess 4'-phosphopantetheine could constitute a directed overflow mechanism to prevent its oxidation to the S-sulfonate, sulfonate, or other forms. Hydrolyzing 4'-phosphopantetheine sulfonate or S-sulfonate would forestall their conversion to inactive forms of CoA and acyl carrier protein. In Oryza sativa subsp. japonica (Rice), this protein is Pantothenate kinase 2.